Consider the following 29-residue polypeptide: Toxin Bl-4 (29 aa).

Belongs to the long (4 C-C) scorpion toxin superfamily. Sodium channel inhibitor family. Beta subfamily. Expressed by the venom gland.

It is found in the secreted. In terms of biological role, excitatory insect beta-toxins induce a spastic paralysis. They bind voltage-independently at site-4 of sodium channels (Nav) and shift the voltage of activation toward more negative potentials thereby affecting sodium channel activation and promoting spontaneous and repetitive firing. The fraction to which this protein belongs exhibits low toxicity and induces transient paralysis in all insects tested (the crickets A.domesticus). The protein is Toxin Bl-4 of Buthacus leptochelys (Egyptian fat-tailed scorpion).